Here is a 264-residue protein sequence, read N- to C-terminus: Thymidylate synthase (264 aa).

Arginine 21 serves as a coordination point for dUMP. A (6R)-5,10-methylene-5,6,7,8-tetrahydrofolate-binding site is contributed by histidine 51. 126–127 (RR) contributes to the dUMP binding site. The active-site Nucleophile is the cysteine 146. DUMP-binding positions include 166–169 (RSAD), asparagine 177, and 207–209 (HLY). Aspartate 169 lines the (6R)-5,10-methylene-5,6,7,8-tetrahydrofolate pocket. A (6R)-5,10-methylene-5,6,7,8-tetrahydrofolate-binding site is contributed by alanine 263.

This sequence belongs to the thymidylate synthase family. Bacterial-type ThyA subfamily. As to quaternary structure, homodimer.

It localises to the cytoplasm. The catalysed reaction is dUMP + (6R)-5,10-methylene-5,6,7,8-tetrahydrofolate = 7,8-dihydrofolate + dTMP. It functions in the pathway pyrimidine metabolism; dTTP biosynthesis. Catalyzes the reductive methylation of 2'-deoxyuridine-5'-monophosphate (dUMP) to 2'-deoxythymidine-5'-monophosphate (dTMP) while utilizing 5,10-methylenetetrahydrofolate (mTHF) as the methyl donor and reductant in the reaction, yielding dihydrofolate (DHF) as a by-product. This enzymatic reaction provides an intracellular de novo source of dTMP, an essential precursor for DNA biosynthesis. The chain is Thymidylate synthase from Allorhizobium ampelinum (strain ATCC BAA-846 / DSM 112012 / S4) (Agrobacterium vitis (strain S4)).